A 110-amino-acid polypeptide reads, in one-letter code: UPF0060 membrane protein Ping_0587 (110 aa).

A run of 4 helical transmembrane segments spans residues 6–26 (IFGI…LPYL), 33–53 (SIWL…LLTL), 61–81 (TYAA…WLVE), and 87–107 (MTDL…MFGP).

This sequence belongs to the UPF0060 family.

The protein localises to the cell inner membrane. This is UPF0060 membrane protein Ping_0587 from Psychromonas ingrahamii (strain DSM 17664 / CCUG 51855 / 37).